We begin with the raw amino-acid sequence, 118 residues long: UPF0145 protein PTO0347 (118 aa).

It belongs to the UPF0145 family.

In Picrophilus torridus (strain ATCC 700027 / DSM 9790 / JCM 10055 / NBRC 100828 / KAW 2/3), this protein is UPF0145 protein PTO0347.